A 282-amino-acid polypeptide reads, in one-letter code: 4-diphosphocytidyl-2-C-methyl-D-erythritol kinase (282 aa).

Lys-15 is an active-site residue. ATP is bound at residue 98–108 (PMGGGVGGGSS). Asp-140 is an active-site residue.

It belongs to the GHMP kinase family. IspE subfamily.

The enzyme catalyses 4-CDP-2-C-methyl-D-erythritol + ATP = 4-CDP-2-C-methyl-D-erythritol 2-phosphate + ADP + H(+). The protein operates within isoprenoid biosynthesis; isopentenyl diphosphate biosynthesis via DXP pathway; isopentenyl diphosphate from 1-deoxy-D-xylulose 5-phosphate: step 3/6. Its function is as follows. Catalyzes the phosphorylation of the position 2 hydroxy group of 4-diphosphocytidyl-2C-methyl-D-erythritol. In Azoarcus sp. (strain BH72), this protein is 4-diphosphocytidyl-2-C-methyl-D-erythritol kinase.